Here is a 288-residue protein sequence, read N- to C-terminus: 5,10-methylenetetrahydrofolate reductase (288 aa).

FAD-binding residues include alanine 51, histidine 73, glycine 106, aspartate 107, alanine 118, tyrosine 140, histidine 144, and lysine 159. Aspartate 107 contributes to the (6S)-5-methyl-5,6,7,8-tetrahydrofolate binding site. Residue glutamine 175 participates in (6S)-5-methyl-5,6,7,8-tetrahydrofolate binding. Position 175 (glutamine 175) interacts with NADH.

It belongs to the methylenetetrahydrofolate reductase family. FAD is required as a cofactor.

The catalysed reaction is (6S)-5-methyl-5,6,7,8-tetrahydrofolate + NAD(+) = (6R)-5,10-methylene-5,6,7,8-tetrahydrofolate + NADH + H(+). It functions in the pathway one-carbon metabolism; tetrahydrofolate interconversion. It participates in amino-acid biosynthesis; L-methionine biosynthesis via de novo pathway. Its function is as follows. Catalyzes the NADH-dependent reduction of 5,10-methylenetetrahydrofolate to 5-methyltetrahydrofolate. Is required to provide the methyl group necessary for methionine synthetase to convert homocysteine to methionine; the methyl group is given by 5-methyltetrahydrofolate. Is required for Sphingobium SYK-6 to grow on vanillate or syringate as the sole source of carbon. This is 5,10-methylenetetrahydrofolate reductase from Sphingobium sp. (strain NBRC 103272 / SYK-6).